The chain runs to 305 residues: tRNA dimethylallyltransferase 2 (305 aa).

Residue 14-21 participates in ATP binding; it reads GPTASGKT. 16–21 is a binding site for substrate; the sequence is TASGKT. Residues 39–42 are interaction with substrate tRNA; sequence DSRQ.

Belongs to the IPP transferase family. Monomer. It depends on Mg(2+) as a cofactor.

It carries out the reaction adenosine(37) in tRNA + dimethylallyl diphosphate = N(6)-dimethylallyladenosine(37) in tRNA + diphosphate. Catalyzes the transfer of a dimethylallyl group onto the adenine at position 37 in tRNAs that read codons beginning with uridine, leading to the formation of N6-(dimethylallyl)adenosine (i(6)A). The sequence is that of tRNA dimethylallyltransferase 2 from Trichlorobacter lovleyi (strain ATCC BAA-1151 / DSM 17278 / SZ) (Geobacter lovleyi).